The following is a 198-amino-acid chain: Recombination protein RecR (198 aa).

The C4-type zinc-finger motif lies at 58 to 73; sequence CSICGNFTDSDPCAIC. The Toprim domain occupies 81–175; sequence SIICVIEEPK…KVTRIAHGIP (95 aa).

It belongs to the RecR family.

May play a role in DNA repair. It seems to be involved in an RecBC-independent recombinational process of DNA repair. It may act with RecF and RecO. This is Recombination protein RecR from Clostridium kluyveri (strain NBRC 12016).